Here is a 305-residue protein sequence, read N- to C-terminus: ATP-dependent Clp protease proteolytic subunit-related protein 4, chloroplastic (305 aa).

The N-terminal 68 residues, 1–68 (MEVAAATATS…SSDLCGAKLR (68 aa)), are a transit peptide targeting the chloroplast.

It belongs to the peptidase S14 family. In terms of assembly, component of the chloroplastic Clp protease core complex which consist of at least 16 proteins: CLPP4 (3 copies), CLPP5 (3 copies), CLPR4 (2 copies), ClpP1 (1 copy), CLPP6 (1 copy), CLPR2 (1 copy), CLPT1 (1 copy), CLPT2 (1 copy) and 3 copies of CLPP3 and/or CLPR1 and/or CLPR3. The core complex is organized in two heptameric rings, one containing CLPP3,4,5,6 in a 1:2:3:1 ratio and the other CLPP1 and CLPR1,2,3,4 in a 3:1:1:1:1 ratio.

It is found in the plastid. Its subcellular location is the chloroplast. In terms of biological role, involved in plastid protein homeostasis. The chain is ATP-dependent Clp protease proteolytic subunit-related protein 4, chloroplastic from Arabidopsis thaliana (Mouse-ear cress).